The following is a 496-amino-acid chain: Beta-N-acetylhexosaminidase (496 aa).

Glutamate 298 (proton donor) is an active-site residue.

This sequence belongs to the glycosyl hydrolase 20 family.

It carries out the reaction Hydrolysis of terminal non-reducing N-acetyl-D-hexosamine residues in N-acetyl-beta-D-hexosaminides.. The protein operates within glycan degradation; chitin degradation. Its function is as follows. Catalyzes the cleavage of beta-N-acetylglucosaminides and beta-N-acetylgalactosaminides. Also catalyzes the hydrolysis of N-acetylchitooligomers. May be involved in chitin degradation. It is not able to cleave beta-glucosides. In Cellulomonas fimi, this protein is Beta-N-acetylhexosaminidase (hex20).